Consider the following 393-residue polypeptide: Acetylornithine aminotransferase (393 aa).

Pyridoxal 5'-phosphate is bound by residues 100–101 and Phe-132; that span reads GT. Arg-135 provides a ligand contact to N(2)-acetyl-L-ornithine. 217 to 220 is a pyridoxal 5'-phosphate binding site; it reads DEIQ. An N6-(pyridoxal phosphate)lysine modification is found at Lys-246. Ser-275 contacts N(2)-acetyl-L-ornithine. Position 276 (Thr-276) interacts with pyridoxal 5'-phosphate.

Belongs to the class-III pyridoxal-phosphate-dependent aminotransferase family. ArgD subfamily. As to quaternary structure, homodimer. The cofactor is pyridoxal 5'-phosphate.

The protein localises to the cytoplasm. The enzyme catalyses N(2)-acetyl-L-ornithine + 2-oxoglutarate = N-acetyl-L-glutamate 5-semialdehyde + L-glutamate. It participates in amino-acid biosynthesis; L-arginine biosynthesis; N(2)-acetyl-L-ornithine from L-glutamate: step 4/4. This Campylobacter jejuni subsp. jejuni serotype O:2 (strain ATCC 700819 / NCTC 11168) protein is Acetylornithine aminotransferase.